Consider the following 262-residue polypeptide: Ribosomal RNA small subunit methyltransferase A (262 aa).

S-adenosyl-L-methionine-binding residues include His-19, Leu-21, Gly-44, Glu-65, Asp-90, and Asn-109. A disordered region spans residues 218 to 246; it reads LPNNLPGPLRERAEEALAGLGHGPDARAE.

It belongs to the class I-like SAM-binding methyltransferase superfamily. rRNA adenine N(6)-methyltransferase family. RsmA subfamily.

The protein localises to the cytoplasm. The catalysed reaction is adenosine(1518)/adenosine(1519) in 16S rRNA + 4 S-adenosyl-L-methionine = N(6)-dimethyladenosine(1518)/N(6)-dimethyladenosine(1519) in 16S rRNA + 4 S-adenosyl-L-homocysteine + 4 H(+). Its function is as follows. Specifically dimethylates two adjacent adenosines (A1518 and A1519) in the loop of a conserved hairpin near the 3'-end of 16S rRNA in the 30S particle. May play a critical role in biogenesis of 30S subunits. This Rubrobacter xylanophilus (strain DSM 9941 / JCM 11954 / NBRC 16129 / PRD-1) protein is Ribosomal RNA small subunit methyltransferase A.